Here is a 623-residue protein sequence, read N- to C-terminus: Endoglucanase 12 (623 aa).

At 1–73 (MYSANHWGGS…LGCVVVKRKL (73 aa)) the chain is on the cytoplasmic side. The chain crosses the membrane as a helical; Signal-anchor for type II membrane protein span at residues 74–94 (LWWVLWTLLAAFILIGLPVII). Residues 95 to 623 (AKSIPKKKPH…TPPPPSKWKP (529 aa)) are Extracellular-facing. The active-site Nucleophile is Asp-166. N-linked (GlcNAc...) asparagine glycans are attached at residues Asn-217, Asn-236, Asn-324, Asn-345, Asn-408, and Asn-425. Catalysis depends on residues His-513, Asp-561, and Glu-570.

The protein belongs to the glycosyl hydrolase 9 (cellulase E) family. As to expression, ubiquitous.

The protein resides in the membrane. The enzyme catalyses Endohydrolysis of (1-&gt;4)-beta-D-glucosidic linkages in cellulose, lichenin and cereal beta-D-glucans.. This is Endoglucanase 12 (GLU3) from Oryza sativa subsp. japonica (Rice).